A 409-amino-acid polypeptide reads, in one-letter code: MNRIGIIGGGASGIVAAIAAARSDGDAQVFILEQKENIGKKILATGNGRCNLTNEAMDASCYHGEDPEFARNVLKQFGYGETLEFFASLGLFTKSRGGYIYPRSDQAASVLELLEMELRRQKVKIYTGVRVEALKLSAKGFVIRADGQRFPADRVILACGGKASKSLGSDGSGYALARSMGHTLSPVVPALVQLKVKKHPFAKAAGVRTDAKVAALLGRQVLAEDTGEMQITAYGISGIPVFQISRHIAKGLYEGKEMKVRVDFLPEMEASQVRKAFNTHLDKCPYATCQEFLTGIFPKKLIPRLLELSHIRQNFPASELKPAQWEDLIRACKQTLLTIEDTNGFDNAQVCAGGVRTGEVYPDTLESRYADGLYLTGELLDVEGICGGYNLQWAWATGYLAGRAAAERP.

The FAD site is built by serine 12, glutamate 33, valine 131, glutamate 378, asparagine 390, and leucine 391.

It belongs to the BaiN/RdsA family. BaiN subfamily. Requires FAD as cofactor.

It carries out the reaction 3-oxocholan-24-oyl-CoA + NAD(+) = 3-oxochol-4-en-24-oyl-CoA + NADH + H(+). The catalysed reaction is 3-oxochol-4-en-24-oyl-CoA + NAD(+) = 3-oxochol-4,6-dien-24-oyl-CoA + NADH + H(+). It catalyses the reaction 12alpha-hydroxy-3-oxocholan-24-oyl-CoA + NAD(+) = 12alpha-hydroxy-3-oxochol-4-en-24-oyl-CoA + NADH + H(+). The enzyme catalyses 12alpha-hydroxy-3-oxochol-4-en-24-oyl-CoA + NAD(+) = 12alpha-hydroxy-3-oxochola-4,6-dien-24-oyl-CoA + NADH + H(+). Its pathway is lipid metabolism; bile acid degradation. Involved in the secondary bile acid metabolism. Catalyzes two subsequent reductions of the double bonds within the bile acid A/B rings of 3-oxochol-4,6-dien-24-oyl-CoA and 12alpha-hydroxy-3-oxochol-4,6-dien-24-oyl-CoA to yield 3-oxocholan-24-oyl-CoA and 12alpha-hydroxy-3-oxocholan-24-oyl-CoA, respectively. The protein is 3-dehydro-bile acid delta(4,6)-reductase of Clostridium scindens (strain ATCC 35704 / DSM 5676 / VPI 13733 / 19).